We begin with the raw amino-acid sequence, 184 residues long: Large ribosomal subunit protein uL15 (184 aa).

A disordered region spans residues 1–50 (MDLSSLRPAKGAVKNKKRVGRGQGSGNGTTAGKGNKGQQARSGYKRPINE). A compositionally biased stretch (gly residues) spans 21–35 (RGQGSGNGTTAGKGN).

Belongs to the universal ribosomal protein uL15 family. In terms of assembly, part of the 50S ribosomal subunit.

Its function is as follows. Binds to the 23S rRNA. The polypeptide is Large ribosomal subunit protein uL15 (Chlorobium luteolum (strain DSM 273 / BCRC 81028 / 2530) (Pelodictyon luteolum)).